A 196-amino-acid chain; its full sequence is SPRY domain-containing protein 7 (196 aa).

Position 2 is an N-acetylalanine (A2). Positions 2–184 constitute a B30.2/SPRY domain; the sequence is ATSVLCCLRC…FSEFYHTPPP (183 aa).

The sequence is that of SPRY domain-containing protein 7 (SPRYD7) from Homo sapiens (Human).